The following is a 449-amino-acid chain: Glycine--tRNA ligase (449 aa).

Residues Arg100 and Glu158 each contribute to the substrate site. Residues 190 to 192 (RNE), 200 to 205 (FRVREF), 275 to 276 (EL), and 319 to 322 (GIER) contribute to the ATP site. 205–209 (FEQFE) serves as a coordination point for substrate. Position 315–319 (315–319 (EPSVG)) interacts with substrate.

The protein belongs to the class-II aminoacyl-tRNA synthetase family. Homodimer.

Its subcellular location is the cytoplasm. The enzyme catalyses tRNA(Gly) + glycine + ATP = glycyl-tRNA(Gly) + AMP + diphosphate. Catalyzes the attachment of glycine to tRNA(Gly). This chain is Glycine--tRNA ligase, found in Mycoplasma pneumoniae (strain ATCC 29342 / M129 / Subtype 1) (Mycoplasmoides pneumoniae).